The following is a 512-amino-acid chain: Probable DNA ligase (512 aa).

Asp-217 is a binding site for ATP. The active-site N6-AMP-lysine intermediate is the Lys-219. Positions 224, 239, 268, 306, 377, and 383 each coordinate ATP.

It belongs to the ATP-dependent DNA ligase family. Requires Mg(2+) as cofactor.

The catalysed reaction is ATP + (deoxyribonucleotide)n-3'-hydroxyl + 5'-phospho-(deoxyribonucleotide)m = (deoxyribonucleotide)n+m + AMP + diphosphate.. DNA ligase that seals nicks in double-stranded DNA during DNA replication, DNA recombination and DNA repair. This Beutenbergia cavernae (strain ATCC BAA-8 / DSM 12333 / CCUG 43141 / JCM 11478 / NBRC 16432 / NCIMB 13614 / HKI 0122) protein is Probable DNA ligase.